Reading from the N-terminus, the 204-residue chain is Holliday junction branch migration complex subunit RuvA (204 aa).

The segment at 1 to 64 is domain I; that stretch reads MIGRLQGILL…EDAHLLFGFA (64 aa). The segment at 65-143 is domain II; it reads QKTDRTLFRE…GVKQSDFFVE (79 aa). The flexible linker stretch occupies residues 144-155; sequence STHIPLSPSIES. The segment at 156 to 204 is domain III; it reads HSESSSDEAISALIALGYKPAEAEKMVKRVAKPELTSEQVIREALKAAL.

This sequence belongs to the RuvA family. As to quaternary structure, homotetramer. Forms an RuvA(8)-RuvB(12)-Holliday junction (HJ) complex. HJ DNA is sandwiched between 2 RuvA tetramers; dsDNA enters through RuvA and exits via RuvB. An RuvB hexamer assembles on each DNA strand where it exits the tetramer. Each RuvB hexamer is contacted by two RuvA subunits (via domain III) on 2 adjacent RuvB subunits; this complex drives branch migration. In the full resolvosome a probable DNA-RuvA(4)-RuvB(12)-RuvC(2) complex forms which resolves the HJ.

Its subcellular location is the cytoplasm. Functionally, the RuvA-RuvB-RuvC complex processes Holliday junction (HJ) DNA during genetic recombination and DNA repair, while the RuvA-RuvB complex plays an important role in the rescue of blocked DNA replication forks via replication fork reversal (RFR). RuvA specifically binds to HJ cruciform DNA, conferring on it an open structure. The RuvB hexamer acts as an ATP-dependent pump, pulling dsDNA into and through the RuvAB complex. HJ branch migration allows RuvC to scan DNA until it finds its consensus sequence, where it cleaves and resolves the cruciform DNA. The polypeptide is Holliday junction branch migration complex subunit RuvA (Haemophilus influenzae (strain PittGG)).